A 275-amino-acid chain; its full sequence is 2,3,4,5-tetrahydropyridine-2,6-dicarboxylate N-succinyltransferase (275 aa).

Substrate is bound by residues arginine 104 and aspartate 141.

The protein belongs to the transferase hexapeptide repeat family. Homotrimer.

It is found in the cytoplasm. The catalysed reaction is (S)-2,3,4,5-tetrahydrodipicolinate + succinyl-CoA + H2O = (S)-2-succinylamino-6-oxoheptanedioate + CoA. Its pathway is amino-acid biosynthesis; L-lysine biosynthesis via DAP pathway; LL-2,6-diaminopimelate from (S)-tetrahydrodipicolinate (succinylase route): step 1/3. The sequence is that of 2,3,4,5-tetrahydropyridine-2,6-dicarboxylate N-succinyltransferase from Mannheimia succiniciproducens (strain KCTC 0769BP / MBEL55E).